A 493-amino-acid chain; its full sequence is Aspartyl/glutamyl-tRNA(Asn/Gln) amidotransferase subunit B (493 aa).

The disordered stretch occupies residues H268–F291. A compositionally biased stretch (basic and acidic residues) spans R280–F291.

The protein belongs to the GatB/GatE family. GatB subfamily. As to quaternary structure, heterotrimer of A, B and C subunits.

The enzyme catalyses L-glutamyl-tRNA(Gln) + L-glutamine + ATP + H2O = L-glutaminyl-tRNA(Gln) + L-glutamate + ADP + phosphate + H(+). It catalyses the reaction L-aspartyl-tRNA(Asn) + L-glutamine + ATP + H2O = L-asparaginyl-tRNA(Asn) + L-glutamate + ADP + phosphate + 2 H(+). In terms of biological role, allows the formation of correctly charged Asn-tRNA(Asn) or Gln-tRNA(Gln) through the transamidation of misacylated Asp-tRNA(Asn) or Glu-tRNA(Gln) in organisms which lack either or both of asparaginyl-tRNA or glutaminyl-tRNA synthetases. The reaction takes place in the presence of glutamine and ATP through an activated phospho-Asp-tRNA(Asn) or phospho-Glu-tRNA(Gln). The chain is Aspartyl/glutamyl-tRNA(Asn/Gln) amidotransferase subunit B from Corynebacterium glutamicum (strain ATCC 13032 / DSM 20300 / JCM 1318 / BCRC 11384 / CCUG 27702 / LMG 3730 / NBRC 12168 / NCIMB 10025 / NRRL B-2784 / 534).